Reading from the N-terminus, the 330-residue chain is Ribosomal RNA small subunit methyltransferase H (330 aa).

S-adenosyl-L-methionine-binding positions include 50–52, aspartate 69, leucine 103, aspartate 117, and glutamine 124; that span reads GGH.

It belongs to the methyltransferase superfamily. RsmH family.

It localises to the cytoplasm. It catalyses the reaction cytidine(1402) in 16S rRNA + S-adenosyl-L-methionine = N(4)-methylcytidine(1402) in 16S rRNA + S-adenosyl-L-homocysteine + H(+). In terms of biological role, specifically methylates the N4 position of cytidine in position 1402 (C1402) of 16S rRNA. This Saccharopolyspora erythraea (strain ATCC 11635 / DSM 40517 / JCM 4748 / NBRC 13426 / NCIMB 8594 / NRRL 2338) protein is Ribosomal RNA small subunit methyltransferase H.